We begin with the raw amino-acid sequence, 352 residues long: Zinc finger CCCH domain-containing protein 42 (352 aa).

The region spanning 36-114 (AYVYVGGIPF…RTIKVDHCGA (79 aa)) is the RRM domain. 2 C3H1-type zinc fingers span residues 130-157 (REAR…HDEK) and 180-207 (REGR…HDEK). Residues 156–179 (EKRAANTGWGHEEDRSSKWDHDKN) form a disordered region. 3 stretches are compositionally biased toward basic and acidic residues: residues 210-230 (ATTG…DKLN), 243-296 (GDFK…RSGR), and 304-352 (RHND…DRRR). Residues 210-352 (ATTGWGHEED…DSLRREDRRR (143 aa)) are disordered. Residues 319–348 (RAQDWEKRKAESRRDRNDREEKDRDSLRRE) are a coiled coil.

The chain is Zinc finger CCCH domain-containing protein 42 from Arabidopsis thaliana (Mouse-ear cress).